Here is a 358-residue protein sequence, read N- to C-terminus: Protein RecA (358 aa).

76 to 83 (GPESSGKT) is a binding site for ATP.

It belongs to the RecA family.

It localises to the cytoplasm. Functionally, can catalyze the hydrolysis of ATP in the presence of single-stranded DNA, the ATP-dependent uptake of single-stranded DNA by duplex DNA, and the ATP-dependent hybridization of homologous single-stranded DNAs. It interacts with LexA causing its activation and leading to its autocatalytic cleavage. In Rhodospirillum centenum (strain ATCC 51521 / SW), this protein is Protein RecA.